The sequence spans 468 residues: 3-isopropylmalate dehydratase large subunit (468 aa).

[4Fe-4S] cluster contacts are provided by Cys347, Cys407, and Cys410.

Belongs to the aconitase/IPM isomerase family. LeuC type 1 subfamily. As to quaternary structure, heterodimer of LeuC and LeuD. The cofactor is [4Fe-4S] cluster.

The catalysed reaction is (2R,3S)-3-isopropylmalate = (2S)-2-isopropylmalate. It participates in amino-acid biosynthesis; L-leucine biosynthesis; L-leucine from 3-methyl-2-oxobutanoate: step 2/4. Functionally, catalyzes the isomerization between 2-isopropylmalate and 3-isopropylmalate, via the formation of 2-isopropylmaleate. The sequence is that of 3-isopropylmalate dehydratase large subunit from Synechococcus sp. (strain CC9311).